Consider the following 96-residue polypeptide: Phosphoribosyl-ATP pyrophosphatase (96 aa).

This sequence belongs to the PRA-PH family.

It localises to the cytoplasm. The enzyme catalyses 1-(5-phospho-beta-D-ribosyl)-ATP + H2O = 1-(5-phospho-beta-D-ribosyl)-5'-AMP + diphosphate + H(+). Its pathway is amino-acid biosynthesis; L-histidine biosynthesis; L-histidine from 5-phospho-alpha-D-ribose 1-diphosphate: step 2/9. The protein is Phosphoribosyl-ATP pyrophosphatase of Methanococcus maripaludis (strain C5 / ATCC BAA-1333).